The following is a 471-amino-acid chain: Protein naked cuticle homolog 1 (471 aa).

2 disordered regions span residues 1–23 (MGKL…GDSF) and 41–82 (QRCP…DEDD). Residue glycine 2 is the site of N-myristoyl glycine attachment. Positions 62–75 (GTRELVGDTSREAL) are enriched in basic and acidic residues. The tract at residues 125-190 (QCDVSVEEDS…LRVKLTVAPD (66 aa)) is interaction with DVL1, DVL2 and DVL3. The EF-hand domain maps to 131-166 (EEDSRQEWTFTLYDFDNNGKVTREDITSLLHTIYEV). Ca(2+) is bound by residues aspartate 144, aspartate 146, asparagine 148, lysine 150, and aspartate 155. Disordered stretches follow at residues 273–314 (GPGS…QGVD), 337–382 (GTQD…SPSA), and 448–471 (QAVQ…FYQP). Residues 453-471 (HEHHHHHEHHHHYHHFYQP) show a composition bias toward basic residues.

The protein belongs to the NKD family. As to quaternary structure, interacts with DVL1, DVL2, DVL3 and PPP2R3A. Highly expressed in lung. Also expressed in brain, heart, kidney, liver, skin, stomach and testis. Within the testis expression is found in the seminiferous epithelium and round and elongating spermatids.

Its subcellular location is the cell membrane. The protein localises to the cytoplasm. Cell autonomous antagonist of the canonical Wnt signaling pathway. May activate a second Wnt signaling pathway that controls planar cell polarity. Required for spermatogenesis. In Mus musculus (Mouse), this protein is Protein naked cuticle homolog 1 (Nkd1).